Reading from the N-terminus, the 124-residue chain is NADH dehydrogenase [ubiquinone] 1 alpha subcomplex subunit 6 (124 aa).

The protein belongs to the complex I LYR family.

It is found in the mitochondrion inner membrane. Its function is as follows. Accessory subunit of the mitochondrial membrane respiratory chain NADH dehydrogenase (Complex I), that is believed to be not involved in catalysis. Complex I functions in the transfer of electrons from NADH to the respiratory chain. The immediate electron acceptor for the enzyme is believed to be ubiquinone. This is NADH dehydrogenase [ubiquinone] 1 alpha subcomplex subunit 6 (ndufa6) from Dictyostelium discoideum (Social amoeba).